Consider the following 211-residue polypeptide: Urease accessory protein UreG (211 aa).

11-18 is a GTP binding site; the sequence is GPVGAGKT.

This sequence belongs to the SIMIBI class G3E GTPase family. UreG subfamily. Homodimer. UreD, UreF and UreG form a complex that acts as a GTP-hydrolysis-dependent molecular chaperone, activating the urease apoprotein by helping to assemble the nickel containing metallocenter of UreC. The UreE protein probably delivers the nickel.

Its subcellular location is the cytoplasm. Functionally, facilitates the functional incorporation of the urease nickel metallocenter. This process requires GTP hydrolysis, probably effectuated by UreG. In Actinobacillus pleuropneumoniae serotype 5b (strain L20), this protein is Urease accessory protein UreG.